Consider the following 444-residue polypeptide: GTPase Der (444 aa).

EngA-type G domains lie at 3 to 167 and 180 to 353; these read PIVA…PEAE and LRLA…AECQ. GTP-binding positions include 9-16, 56-60, 119-122, 186-193, 233-237, and 298-301; these read GRPNVGKS, DTGGM, NKVD, GRPNAGKS, DTAGV, and NKTD. Residues 354-438 enclose the KH-like domain; the sequence is IRIGTGELNR…PVKVVCRASH (85 aa).

The protein belongs to the TRAFAC class TrmE-Era-EngA-EngB-Septin-like GTPase superfamily. EngA (Der) GTPase family. Associates with the 50S ribosomal subunit.

Its function is as follows. GTPase that plays an essential role in the late steps of ribosome biogenesis. This is GTPase Der from Solidesulfovibrio magneticus (strain ATCC 700980 / DSM 13731 / RS-1) (Desulfovibrio magneticus).